Consider the following 251-residue polypeptide: Pyridoxine 5'-phosphate synthase (251 aa).

N7 lines the 3-amino-2-oxopropyl phosphate pocket. Position 9-10 (9-10 (DH)) interacts with 1-deoxy-D-xylulose 5-phosphate. R18 serves as a coordination point for 3-amino-2-oxopropyl phosphate. H43 (proton acceptor) is an active-site residue. 1-deoxy-D-xylulose 5-phosphate-binding residues include R45 and H50. The Proton acceptor role is filled by E70. T100 serves as a coordination point for 1-deoxy-D-xylulose 5-phosphate. The active-site Proton donor is H198. Residues A199 and 220–221 (GH) contribute to the 3-amino-2-oxopropyl phosphate site.

It belongs to the PNP synthase family. Homooctamer; tetramer of dimers.

The protein resides in the cytoplasm. It catalyses the reaction 3-amino-2-oxopropyl phosphate + 1-deoxy-D-xylulose 5-phosphate = pyridoxine 5'-phosphate + phosphate + 2 H2O + H(+). Its pathway is cofactor biosynthesis; pyridoxine 5'-phosphate biosynthesis; pyridoxine 5'-phosphate from D-erythrose 4-phosphate: step 5/5. Functionally, catalyzes the complicated ring closure reaction between the two acyclic compounds 1-deoxy-D-xylulose-5-phosphate (DXP) and 3-amino-2-oxopropyl phosphate (1-amino-acetone-3-phosphate or AAP) to form pyridoxine 5'-phosphate (PNP) and inorganic phosphate. The chain is Pyridoxine 5'-phosphate synthase from Dechloromonas aromatica (strain RCB).